The chain runs to 214 residues: MSKPPPKPVKPGQVKVFRALYTFEPRTPDELYFEEGDIIYITDMSDTSWWKGTCKGRTGLIPSNYVAEQAESIDNPLHEAAKRGNLSWLRECLDNRVGVNGLDKAGSTALYWACHGGHKDIVEVLFTQPNVELNQQNKLGDTALHAAAWKGYADIVQLLLAKGARTDLRNNEKKLALDMATNAACASLLKKKQATDGARTLSNAEDYLDDEDSD.

Serine 2 carries the post-translational modification N-acetylserine. Residues 12–71 enclose the SH3 domain; the sequence is GQVKVFRALYTFEPRTPDELYFEEGDIIYITDMSDTSWWKGTCKGRTGLIPSNYVAEQAE. 3 ANK repeats span residues 72 to 101, 105 to 135, and 139 to 168; these read SIDN…GVNG, AGST…ELNQ, and LGDT…RTDL. Threonine 200 bears the Phosphothreonine mark. Residues serine 202 and serine 213 each carry the phosphoserine modification.

As to quaternary structure, interacts with SRC and SMN1. Interacts with FASLG.

Its subcellular location is the cytoplasm. Functionally, induces bone resorption, acting probably through a signaling cascade which results in the secretion of factor(s) enhancing osteoclast formation and activity. The chain is Osteoclast-stimulating factor 1 (Ostf1) from Rattus norvegicus (Rat).